A 954-amino-acid chain; its full sequence is Endogenous retrovirus group K member 25 Pol protein (954 aa).

Residues 57-245 form the Reverse transcriptase domain; the sequence is LEKGHIEPSF…TPFHYLGMQI (189 aa). The short motif at 161 to 164 is the LPQG element; the sequence is LPQG. The YXDD motif lies at 195–198; that stretch reads YIDD. The region spanning 460–588 is the RNase H type-1 domain; sequence LENALTVFTD…ADLLVSSALI (129 aa). The Mg(2+) site is built by Asp-469, Glu-497, Asp-515, and Asp-580. The Integrase-type zinc-finger motif lies at 585–626; it reads SALIKAQELHALTHVNAAGLKNKFDVTWKLAKDIVQHCTQCQ. Positions 594, 598, 622, and 625 each coordinate Zn(2+). One can recognise an Integrase catalytic domain in the interval 640-801; it reads RGLCPNALWQ…TSAEQHLTGK (162 aa). Residues 809-857 constitute a DNA-binding region (integrase-type); that stretch reads KLIWWKDNKNKTWEIGKVITWGRGFACVSPGENQLPVWIPTRHLKFYNE. Residues 862–888 form a disordered region; sequence AKKSTSAETETPQSSTVDSQDEQNGDV. A compositionally biased stretch (polar residues) spans 867-879; it reads SAETETPQSSTVD.

It belongs to the beta type-B retroviral polymerase family. HERV class-II K(HML-2) pol subfamily.

The enzyme catalyses DNA(n) + a 2'-deoxyribonucleoside 5'-triphosphate = DNA(n+1) + diphosphate. The catalysed reaction is Endonucleolytic cleavage to 5'-phosphomonoester.. Early post-infection, the reverse transcriptase converts the viral RNA genome into double-stranded viral DNA. The RNase H domain of the reverse transcriptase performs two functions. It degrades the RNA template and specifically removes the RNA primer from the RNA/DNA hybrid. Following nuclear import, the integrase catalyzes the insertion of the linear, double-stranded viral DNA into the host cell chromosome. Endogenous Pol proteins may have kept, lost or modified their original function during evolution. The polypeptide is Endogenous retrovirus group K member 25 Pol protein (ERVK-25) (Homo sapiens (Human)).